An 88-amino-acid polypeptide reads, in one-letter code: Small ribosomal subunit protein uS15c (88 aa).

The protein belongs to the universal ribosomal protein uS15 family. In terms of assembly, part of the 30S ribosomal subunit.

It is found in the plastid. The protein localises to the chloroplast. The sequence is that of Small ribosomal subunit protein uS15c (rps15) from Crucihimalaya wallichii (Rock-cress).